A 204-amino-acid polypeptide reads, in one-letter code: Large ribosomal subunit protein eL15 (204 aa).

The protein belongs to the eukaryotic ribosomal protein eL15 family. In terms of assembly, component of the large ribosomal subunit.

The protein localises to the cytoplasm. Functionally, component of the large ribosomal subunit. The ribosome is a large ribonucleoprotein complex responsible for the synthesis of proteins in the cell. The protein is Large ribosomal subunit protein eL15 (rpl15) of Monopterus albus (Swamp eel).